The sequence spans 625 residues: RecQ-mediated genome instability protein 1 (625 aa).

Methionine 1 carries the N-acetylmethionine modification. Serine 225 is subject to Phosphoserine. Residues 257–282 (LTANNDTSSERCFTTGSSSNTIPTRQ) form a disordered region. Residues serine 284 and serine 292 each carry the phosphoserine modification. Residues lysine 334, lysine 387, and lysine 426 each participate in a glycyl lysine isopeptide (Lys-Gly) (interchain with G-Cter in SUMO2) cross-link.

This sequence belongs to the RMI1 family. In terms of assembly, component of the RMI complex, containing at least TOP3A, RMI1 and RMI2. The RMI complex interacts with BLM. Directly interacts with RMI2 and TOP3A. May bind DHJ. Interacts (via N-terminal region) with BLM; the interaction is direct.

It is found in the nucleus. Functionally, essential component of the RMI complex, a complex that plays an important role in the processing of homologous recombination intermediates to limit DNA crossover formation in cells. Promotes TOP3A binding to double Holliday junctions (DHJ) and hence stimulates TOP3A-mediated dissolution. Required for BLM phosphorylation during mitosis. Within the BLM complex, required for BLM and TOP3A stability. This is RecQ-mediated genome instability protein 1 (RMI1) from Homo sapiens (Human).